Reading from the N-terminus, the 467-residue chain is Na(+)-translocating NADH-quinone reductase subunit A (467 aa).

Belongs to the NqrA family. Composed of six subunits; NqrA, NqrB, NqrC, NqrD, NqrE and NqrF.

It catalyses the reaction a ubiquinone + n Na(+)(in) + NADH + H(+) = a ubiquinol + n Na(+)(out) + NAD(+). In terms of biological role, NQR complex catalyzes the reduction of ubiquinone-1 to ubiquinol by two successive reactions, coupled with the transport of Na(+) ions from the cytoplasm to the periplasm. NqrA to NqrE are probably involved in the second step, the conversion of ubisemiquinone to ubiquinol. The sequence is that of Na(+)-translocating NADH-quinone reductase subunit A from Chlamydia pneumoniae (Chlamydophila pneumoniae).